An 89-amino-acid chain; its full sequence is Small ribosomal subunit protein uS15 (89 aa).

The protein belongs to the universal ribosomal protein uS15 family. As to quaternary structure, part of the 30S ribosomal subunit. Forms a bridge to the 50S subunit in the 70S ribosome, contacting the 23S rRNA.

Its function is as follows. One of the primary rRNA binding proteins, it binds directly to 16S rRNA where it helps nucleate assembly of the platform of the 30S subunit by binding and bridging several RNA helices of the 16S rRNA. In terms of biological role, forms an intersubunit bridge (bridge B4) with the 23S rRNA of the 50S subunit in the ribosome. The sequence is that of Small ribosomal subunit protein uS15 from Micrococcus luteus (strain ATCC 4698 / DSM 20030 / JCM 1464 / CCM 169 / CCUG 5858 / IAM 1056 / NBRC 3333 / NCIMB 9278 / NCTC 2665 / VKM Ac-2230) (Micrococcus lysodeikticus).